Consider the following 502-residue polypeptide: Type II secretion system protein E (502 aa).

Residue 263–270 coordinates ATP; that stretch reads GPTGSGKT. Positions 396, 399, 429, and 432 each coordinate Zn(2+). The segment at 461–480 is disordered; it reads SSEQEMTRHARTSGPSIRDD.

This sequence belongs to the GSP E family. Homodimer. Dimerization is directed by a relatively short domain near the extreme N-terminus and is essential for extracellular protein secretion. May form homooligomers. Interacts with XcpY/GspL. Forms an inner membrane platform subcomplex with XcpS/GspF, XcpY/GspL and XcpZ/GspM. Zn(2+) serves as cofactor.

It localises to the cell inner membrane. The catalysed reaction is ATP + H2O + cellular proteinSide 1 = ADP + phosphate + cellular proteinSide 2.. ATPase component of the type II secretion system required for the energy-dependent secretion of extracellular factors such as proteases and toxins from the periplasm. Acts as a molecular motor to provide the energy that is required for assembly of the pseudopilus and the extrusion of substrates generated in the cytoplasm. This chain is Type II secretion system protein E (xcpR), found in Pseudomonas aeruginosa (strain ATCC 15692 / DSM 22644 / CIP 104116 / JCM 14847 / LMG 12228 / 1C / PRS 101 / PAO1).